Consider the following 311-residue polypeptide: Methionyl-tRNA formyltransferase (311 aa).

112 to 115 (SLLP) lines the (6S)-5,6,7,8-tetrahydrofolate pocket.

This sequence belongs to the Fmt family.

The enzyme catalyses L-methionyl-tRNA(fMet) + (6R)-10-formyltetrahydrofolate = N-formyl-L-methionyl-tRNA(fMet) + (6S)-5,6,7,8-tetrahydrofolate + H(+). Its function is as follows. Attaches a formyl group to the free amino group of methionyl-tRNA(fMet). The formyl group appears to play a dual role in the initiator identity of N-formylmethionyl-tRNA by promoting its recognition by IF2 and preventing the misappropriation of this tRNA by the elongation apparatus. The polypeptide is Methionyl-tRNA formyltransferase (Agrobacterium fabrum (strain C58 / ATCC 33970) (Agrobacterium tumefaciens (strain C58))).